The primary structure comprises 207 residues: Dephospho-CoA kinase (207 aa).

The DPCK domain occupies 10–207; it reads ILGLTGGIGS…FYLTLRGGQS (198 aa). 18–23 contributes to the ATP binding site; it reads GSGKSA.

Belongs to the CoaE family.

The protein localises to the cytoplasm. The enzyme catalyses 3'-dephospho-CoA + ATP = ADP + CoA + H(+). It participates in cofactor biosynthesis; coenzyme A biosynthesis; CoA from (R)-pantothenate: step 5/5. Its function is as follows. Catalyzes the phosphorylation of the 3'-hydroxyl group of dephosphocoenzyme A to form coenzyme A. This Pseudomonas savastanoi pv. phaseolicola (strain 1448A / Race 6) (Pseudomonas syringae pv. phaseolicola (strain 1448A / Race 6)) protein is Dephospho-CoA kinase.